Here is a 1151-residue protein sequence, read N- to C-terminus: MESSSTPLAEYFWIAGVESVSYQDPNSQPAPAVPVESTIIEDGEPEDEWTNGGQPKTNARHSRQNSASRLSKMSLTERFSIQTLDDTDGNTKSNRSSATIRAVNPPDFSNGNDDSNGNSQNPAPSGTLGEGSMFMGDFDFDKALVKFAAEREVFLEDLTFSAGAKVQARAPMVNPRMERIRAEESDSGRLSPLRSIKGSIRRKMSFRDMNSVRKQPSNRISTSRAASIRTTRRLSNYNSVIPPPEPLNTDPDMHPLKRRFEPVLLDRYPPQEAGDEISRRGRFPDYVPMFAFPNDIQIVSSDDRPRSTWHGFTMTSDDNSKLYGITIIIWIALNADVAEDVEKKCEEWRQSHMSEEERELAASLGVRLAGERTHLSQLLAKLPTIPSGSPARERLEDEISTVEEKITLMTDMLRPLRHGAASKIEGLTAGESGLWAPRAYGILGRDAGNMSFWKEWLKAIVTPMTDGSVLRIPPSSPRVGRWQPLERYVVNLCTEAFNPLGSKTQVELGVRELRLYARKEADNEIPGSRTIDIYALFRCLSLENIVALFEYAMAESRIIFLSSHASMLHLACHALANLLYPLKWASIFIPILPARLLSALEAPCPYIVGIERRYDNIELPEDDYVLVDLDKDTIDATSQPVRLPRQARRKLMSLLQVAAPHKLRYGVATGPPPYAMESFPYDAFSTENGSLFRTSTPKSTLGKWVSQSSSGFGEADPPNEIQPPIFNAFASAHVENGKSDRPSTSKSGKTSPQSSVSPVSINFPPMPSTPVSRSDSGFALASTLREKRSGHFGEEKMRRSSSFGVDKHPPFQKPGMPFLNGHQANLSISAISVESQNSVIGGANGGYGGGYAPSTYAQSTLAASTIMPSMQIQPVRNTETTVWVEGHCFNYMPKDNTSMCTICNDLAEGDGVYRCTGCKIVSHGRCLGYCSLICPEAFHADRVRAAFVRCLASLLYTYRKYLGRPSKQQKSNGQLYAFDMDGFIKSLPHDQHDYAAMMRETQCFNEFIHDREMQPANDASIRLFDEIIMAKKARGRSGLATGLSRLSTLRASHGASTYGGFGPARGGSNSKIPAFLGDISDHIWRTASVPLPKGNFPGEYKTIVTRTPARLDRSLMREPRSIQGMPRVEPRGTRGLIRKQVPNMFGTTPPT.

3 disordered regions span residues 22 to 130 (YQDP…TLGE), 178 to 197 (ERIRAEESDSGRLSPLRSIK), and 236 to 255 (NYNSVIPPPEPLNTDPDMHP). A compositionally biased stretch (acidic residues) spans 39 to 49 (IIEDGEPEDEW). Over residues 64–99 (QNSASRLSKMSLTERFSIQTLDDTDGNTKSNRSSAT) the composition is skewed to polar residues. Over residues 104–122 (NPPDFSNGNDDSNGNSQNP) the composition is skewed to low complexity. Over residues 178-187 (ERIRAEESDS) the composition is skewed to basic and acidic residues. The region spanning 242–500 (PPPEPLNTDP…NLCTEAFNPL (259 aa)) is the uDENN domain. The region spanning 524 to 656 (EIPGSRTIDI…ARRKLMSLLQ (133 aa)) is the cDENN domain. Positions 658–1019 (AAPHKLRYGV…DREMQPANDA (362 aa)) constitute a dDENN domain. 2 stretches are compositionally biased toward polar residues: residues 695-711 (STPKSTLGKWVSQSSSG) and 744-760 (TSKSGKTSPQSSVSPVS). The segment at 695-809 (STPKSTLGKW…SSSFGVDKHP (115 aa)) is disordered. The segment covering 784 to 798 (LREKRSGHFGEEKMR) has biased composition (basic and acidic residues). A Phorbol-ester/DAG-type zinc finger spans residues 886-934 (GHCFNYMPKDNTSMCTICNDLAEGDGVYRCTGCKIVSHGRCLGYCSLIC).

Belongs to the EPD1 elicitor family.

The protein localises to the secreted. It is found in the host cell. Functionally, acts as an elicitor that triggers cell death and defense responses in the host plants. This is Elicitor of plant defense protein 1 from Gibberella zeae (strain ATCC MYA-4620 / CBS 123657 / FGSC 9075 / NRRL 31084 / PH-1) (Wheat head blight fungus).